The chain runs to 730 residues: Ribosomal RNA large subunit methyltransferase K/L (730 aa).

One can recognise a THUMP domain in the interval 46 to 157 (TAYRLCVWSR…RGEAILSLDL (112 aa)). Residues 395 to 418 (ERREAQPEGTEVRQQAPQASEPAR) form a disordered region.

This sequence belongs to the methyltransferase superfamily. RlmKL family.

Its subcellular location is the cytoplasm. It carries out the reaction guanosine(2445) in 23S rRNA + S-adenosyl-L-methionine = N(2)-methylguanosine(2445) in 23S rRNA + S-adenosyl-L-homocysteine + H(+). The catalysed reaction is guanosine(2069) in 23S rRNA + S-adenosyl-L-methionine = N(2)-methylguanosine(2069) in 23S rRNA + S-adenosyl-L-homocysteine + H(+). Functionally, specifically methylates the guanine in position 2445 (m2G2445) and the guanine in position 2069 (m7G2069) of 23S rRNA. This Pseudomonas putida (strain GB-1) protein is Ribosomal RNA large subunit methyltransferase K/L.